A 230-amino-acid polypeptide reads, in one-letter code: Orotidine 5'-phosphate decarboxylase (230 aa).

Substrate contacts are provided by residues aspartate 11, lysine 34, 61 to 70 (DLKLHDIPNT), threonine 117, arginine 179, glutamine 188, glycine 208, and arginine 209. Residue lysine 63 is the Proton donor of the active site.

Belongs to the OMP decarboxylase family. Type 1 subfamily. Homodimer.

It carries out the reaction orotidine 5'-phosphate + H(+) = UMP + CO2. Its pathway is pyrimidine metabolism; UMP biosynthesis via de novo pathway; UMP from orotate: step 2/2. Its function is as follows. Catalyzes the decarboxylation of orotidine 5'-monophosphate (OMP) to uridine 5'-monophosphate (UMP). This Streptococcus pyogenes serotype M49 (strain NZ131) protein is Orotidine 5'-phosphate decarboxylase.